The primary structure comprises 292 residues: MNIRGTPDLGQPSDDPSSGGERERIRQRMKMVIGQLEDILRELKEVAKELREVVSQIDKLTSDFDFELEPDDWTTATVSSTSSSDKAGVGGPFDLGHLDFMTADILSDSWEFCSFLDISTPSDSVDCPESTRPGAGPDYQLMNGGLPVPNGPRVETPDSSSEEAFSAGPVKGQLPQRTPGTRERVRFSDKVLYHALCCDDEEGDGEEEAAEEEGGLSPEPAHTEAPAGPLKPSPAPYKPRRSPLTGRRSGPTSVPEQTRRVTRNSSTQTVSDKSTQTVLPYTATRQKAKGKN.

3 disordered regions span residues 1 to 25 (MNIR…RERI), 122 to 186 (SDSV…ERVR), and 198 to 292 (CDDE…KGKN). Residues 23 to 63 (ERIRQRMKMVIGQLEDILRELKEVAKELREVVSQIDKLTSD) are a coiled coil. A compositionally biased stretch (acidic residues) spans 198-214 (CDDEEGDGEEEAAEEEG). Residues 263 to 285 (RNSSTQTVSDKSTQTVLPYTATR) show a composition bias toward polar residues.

Belongs to the INSYN1 family. In terms of assembly, interacts with GPHN.

It is found in the postsynaptic density. Functionally, component of the protein machinery at the inhibitory synapses, probably acting as a scaffold. Inhibitory synapses dampen neuronal activity through postsynaptic hyperpolarization. This synaptic inhibition is fundamental for the functioning of the central nervous system, shaping and orchestrating the flow of information through neuronal networks to generate a precise neural code. The sequence is that of Inhibitory synaptic factor 1 from Bos taurus (Bovine).